The primary structure comprises 397 residues: MTTLLNPYFGEFGGMYVPQILMPALRQLEEAFVSAQKDPEFQAQFNDLLKNYAGRPTALTKCQNITAGTNTTLYLKREDLLHGGAHKTNQVLGQALLAKRMGKTEIIAETGAGQHGVASALASALLGLKCRIYMGAKDVERQSPNVFRMRLMGAEVIPVHSGSATLKDACNEALRDWSGSYETAHYMLGTAAGPHPYPTIVREFQRMIGEETKAQILEREGRLPDAVIACVGGGSNAIGMFADFINETNVGLIGVEPGGHGIETGEHGAPLKHGRVGIYFGMKAPMMQTEDGQIEESYSISAGLDFPSVGPQHAYLNSTGRADYVSITDDEALEAFKTLCLHEGIIPALESSHALAHALKMMRENPDKEQLLVVNLSGRGDKDIFTVHDILKARGEI.

K87 carries the post-translational modification N6-(pyridoxal phosphate)lysine.

It belongs to the TrpB family. As to quaternary structure, tetramer of two alpha and two beta chains. Pyridoxal 5'-phosphate is required as a cofactor.

The catalysed reaction is (1S,2R)-1-C-(indol-3-yl)glycerol 3-phosphate + L-serine = D-glyceraldehyde 3-phosphate + L-tryptophan + H2O. It functions in the pathway amino-acid biosynthesis; L-tryptophan biosynthesis; L-tryptophan from chorismate: step 5/5. Its function is as follows. The beta subunit is responsible for the synthesis of L-tryptophan from indole and L-serine. The protein is Tryptophan synthase beta chain of Escherichia coli O139:H28 (strain E24377A / ETEC).